Consider the following 77-residue polypeptide: Large ribosomal subunit protein uL29 (77 aa).

It belongs to the universal ribosomal protein uL29 family.

The sequence is that of Large ribosomal subunit protein uL29 from Cutibacterium acnes (strain DSM 16379 / KPA171202) (Propionibacterium acnes).